Here is a 206-residue protein sequence, read N- to C-terminus: Ribosomal RNA large subunit methyltransferase E (206 aa).

S-adenosyl-L-methionine-binding residues include G60, W62, D80, D96, and D121. The Proton acceptor role is filled by K161.

Belongs to the class I-like SAM-binding methyltransferase superfamily. RNA methyltransferase RlmE family.

It is found in the cytoplasm. It catalyses the reaction uridine(2552) in 23S rRNA + S-adenosyl-L-methionine = 2'-O-methyluridine(2552) in 23S rRNA + S-adenosyl-L-homocysteine + H(+). Functionally, specifically methylates the uridine in position 2552 of 23S rRNA at the 2'-O position of the ribose in the fully assembled 50S ribosomal subunit. This Francisella tularensis subsp. novicida (strain U112) protein is Ribosomal RNA large subunit methyltransferase E.